The sequence spans 89 residues: Small ribosomal subunit protein uS19 (89 aa).

It belongs to the universal ribosomal protein uS19 family.

Its function is as follows. Protein S19 forms a complex with S13 that binds strongly to the 16S ribosomal RNA. This chain is Small ribosomal subunit protein uS19, found in Akkermansia muciniphila (strain ATCC BAA-835 / DSM 22959 / JCM 33894 / BCRC 81048 / CCUG 64013 / CIP 107961 / Muc).